The primary structure comprises 372 residues: Probable NADH-dependent flavin oxidoreductase YqiG (372 aa).

This sequence belongs to the NADH:flavin oxidoreductase/NADH oxidase family.

The chain is Probable NADH-dependent flavin oxidoreductase YqiG (yqiG) from Bacillus subtilis (strain 168).